The following is a 567-amino-acid chain: DNA ligase (567 aa).

Glu-246 is an ATP binding site. Lys-248 (N6-AMP-lysine intermediate) is an active-site residue. ATP contacts are provided by Arg-253, Arg-268, Glu-298, Phe-339, Arg-415, and Lys-421.

The protein belongs to the ATP-dependent DNA ligase family. Requires Mg(2+) as cofactor.

It carries out the reaction ATP + (deoxyribonucleotide)n-3'-hydroxyl + 5'-phospho-(deoxyribonucleotide)m = (deoxyribonucleotide)n+m + AMP + diphosphate.. In terms of biological role, DNA ligase that seals nicks in double-stranded DNA during DNA replication, DNA recombination and DNA repair. This Nanoarchaeum equitans (strain Kin4-M) protein is DNA ligase.